Here is a 193-residue protein sequence, read N- to C-terminus: Cerebellin-1 (193 aa).

Residues 1-21 form the signal peptide; it reads MLGVLELLLLGAAWLAGPARG. N-linked (GlcNAc...) asparagine glycosylation occurs at Asn-23. Residues 34 to 38 form an essential for interaction with NRXN1 and linker of two C1q trimers into disulfide-linked hexamers region; it reads CLVVC. The region spanning 57 to 193 is the C1q domain; the sequence is SGSAKVAFSA…TFSGFLVFPL (137 aa). The interval 62–193 is necessary for interaction with CBLN3, and homotrimerization; it reads VAFSAIRSTN…TFSGFLVFPL (132 aa). A glycan (N-linked (GlcNAc...) asparagine) is linked at Asn-79. The tract at residues 122 to 147 is essential for interaction with GRID2; it reads YNRQTIQVSLMLNGWPVISAFAGDQD.

As to quaternary structure, homohexamer; disulfide-linked homotrimers. The trimers associate via N-terminal cysteine residues to form disulfide-linked hexamers. May form oligomers with CBLN2, CBLN3 AND CBLN4 prior to secretion. Once secreted, does not interact with other CBLN family members. Interacts with GRID1. Interacts with NRXN1 and NRXN2 long (alpha) and short (beta) isoforms produced by alternative promoter usage. Competes with NLGN1 for NRXN1-binding. Weakly interacts with NRXN3 short isoform and not at all with NRXN3 long isoform. Interacts (via C1q domain) with GRID2; GRID2-binding is calcium-independent; CBLN1 hexamers anchor GRID2 N-terminal domain dimers to monomeric NRXN1 isoform beta; promotes synaptogenesis and mediates the D-Serine-dependent long term depression signals and AMPA receptor endocytosis. Interacts with OTOL1. The proteolytic processing to yield cerebellin seems to occur either prior to the secretion by presynaptic neurons and subsequent oligomerization or in some other location after release of the mature protein. Post-translationally, sialoglycoprotein. In the Purkinje cells postsynaptic structures. In the cerebellum, cerebellin is much less abundant than [des-Ser1]-cerebellin.

Its subcellular location is the secreted. It is found in the postsynaptic cell membrane. Required for synapse integrity and synaptic plasticity. During cerebellar synapse formation, essential for the matching and maintenance of pre- and post-synaptic elements at parallel fiber-Purkinje cell synapses, the establishment of the proper pattern of climbing fiber-Purkinje cell innervation, and induction of long-term depression at parallel fiber-Purkinje cell synapses. Plays a role as a synaptic organizer that acts bidirectionally on both pre- and post-synaptic components. On the one hand induces accumulation of synaptic vesicles in the pre-synaptic part by binding with NRXN1 and in other hand induces clustering of GRID2 and its associated proteins at the post-synaptic site through association of GRID2. NRXN1-CBLN1-GRID2 complex directly induces parallel fiber protrusions that encapsulate spines of Purkinje cells leading to accumulation of GRID2 and synaptic vesicles. Required for CBLN3 export from the endoplasmic reticulum and secretion. NRXN1-CBLN1-GRID2 complex mediates the D-Serine-dependent long term depression signals and AMPA receptor endocytosis. Essential for long-term maintenance but not establishment of excitatory synapses. Inhibits the formation and function of inhibitory GABAergic synapses in cerebellar Purkinje cells. Functionally, the cerebellin peptide exerts neuromodulatory functions. Directly stimulates norepinephrine release via the adenylate cyclase/PKA-dependent signaling pathway; and indirectly enhances adrenocortical secretion in vivo, through a paracrine mechanism involving medullary catecholamine release. The polypeptide is Cerebellin-1 (CBLN1) (Homo sapiens (Human)).